The chain runs to 328 residues: DNA-directed RNA polymerase subunit alpha (328 aa).

Positions Met-1–Asn-244 are alpha N-terminal domain (alpha-NTD). The tract at residues Lys-261–Ser-328 is alpha C-terminal domain (alpha-CTD).

It belongs to the RNA polymerase alpha chain family. As to quaternary structure, homodimer. The RNAP catalytic core consists of 2 alpha, 1 beta, 1 beta' and 1 omega subunit. When a sigma factor is associated with the core the holoenzyme is formed, which can initiate transcription.

It carries out the reaction RNA(n) + a ribonucleoside 5'-triphosphate = RNA(n+1) + diphosphate. Its function is as follows. DNA-dependent RNA polymerase catalyzes the transcription of DNA into RNA using the four ribonucleoside triphosphates as substrates. The sequence is that of DNA-directed RNA polymerase subunit alpha from Mycoplasma genitalium (strain ATCC 33530 / DSM 19775 / NCTC 10195 / G37) (Mycoplasmoides genitalium).